The primary structure comprises 435 residues: Nucleoredoxin (435 aa).

Position 2 is an N-acetylserine (Ser-2). One can recognise a Thioredoxin domain in the interval Pro-167–Glu-314.

The protein belongs to the nucleoredoxin family. Associates with the phosphatase 2A holoenzyme. Interacts with PPP2CA; the interaction is direct. Interacts with DVL1 (via PDZ domain); the interaction is direct and regulated by oxidative stress. In terms of tissue distribution, widely expressed with higher expression in testis and skin.

The protein localises to the cytoplasm. The protein resides in the cytosol. It localises to the nucleus. The enzyme catalyses [protein]-dithiol + NAD(+) = [protein]-disulfide + NADH + H(+). It catalyses the reaction [protein]-dithiol + NADP(+) = [protein]-disulfide + NADPH + H(+). Its function is as follows. Functions as a redox-dependent negative regulator of the Wnt signaling pathway, possibly by preventing ubiquitination of DVL3 by the BCR(KLHL12) complex. May also function as a transcriptional regulator act as a regulator of protein phosphatase 2A (PP2A). This chain is Nucleoredoxin (Nxn), found in Mus musculus (Mouse).